A 56-amino-acid chain; its full sequence is Single-pass membrane and coiled-coil domain-containing protein 4 homolog (56 aa).

Positions 1-27 are disordered; sequence MRQLPGKAAKETRKMKRERKQQNKEGH. Residues 9-31 are a coiled coil; that stretch reads AKETRKMKRERKQQNKEGHNRVV. The chain crosses the membrane as a helical span at residues 30 to 50; that stretch reads VVTVAIPVCLAVFVMLIVYVY.

The protein belongs to the SMCO4 family.

The protein resides in the membrane. The protein is Single-pass membrane and coiled-coil domain-containing protein 4 homolog of Nematostella vectensis (Starlet sea anemone).